We begin with the raw amino-acid sequence, 294 residues long: Pyridoxal 5'-phosphate synthase subunit PdxS (294 aa).

Asp24 is a D-ribose 5-phosphate binding site. The active-site Schiff-base intermediate with D-ribose 5-phosphate is the Lys81. D-ribose 5-phosphate is bound at residue Gly153. Arg165 is a D-glyceraldehyde 3-phosphate binding site. D-ribose 5-phosphate contacts are provided by residues Gly214 and Gly235–Ser236.

This sequence belongs to the PdxS/SNZ family. In terms of assembly, in the presence of PdxT, forms a dodecamer of heterodimers.

It catalyses the reaction aldehydo-D-ribose 5-phosphate + D-glyceraldehyde 3-phosphate + L-glutamine = pyridoxal 5'-phosphate + L-glutamate + phosphate + 3 H2O + H(+). Its pathway is cofactor biosynthesis; pyridoxal 5'-phosphate biosynthesis. In terms of biological role, catalyzes the formation of pyridoxal 5'-phosphate from ribose 5-phosphate (RBP), glyceraldehyde 3-phosphate (G3P) and ammonia. The ammonia is provided by the PdxT subunit. Can also use ribulose 5-phosphate and dihydroxyacetone phosphate as substrates, resulting from enzyme-catalyzed isomerization of RBP and G3P, respectively. The chain is Pyridoxal 5'-phosphate synthase subunit PdxS from Anoxybacillus flavithermus (strain DSM 21510 / WK1).